A 372-amino-acid polypeptide reads, in one-letter code: NAD(P)H-quinone oxidoreductase subunit 1 (372 aa).

A run of 8 helical transmembrane segments spans residues 27–47, 97–117, 128–148, 176–196, 204–224, 266–286, 308–328, and 347–367; these read IIWL…GVLV, ILFT…WLIV, VGIG…GLLM, LALS…IDIV, ILSW…ICAL, ILSA…PIPV, SIGI…AILL, and FLLP…LAFP.

This sequence belongs to the complex I subunit 1 family. In terms of assembly, NDH-1 is composed of at least 11 different subunits.

Its subcellular location is the cellular thylakoid membrane. It catalyses the reaction a plastoquinone + NADH + (n+1) H(+)(in) = a plastoquinol + NAD(+) + n H(+)(out). The catalysed reaction is a plastoquinone + NADPH + (n+1) H(+)(in) = a plastoquinol + NADP(+) + n H(+)(out). NDH-1 shuttles electrons from an unknown electron donor, via FMN and iron-sulfur (Fe-S) centers, to quinones in the respiratory and/or the photosynthetic chain. The immediate electron acceptor for the enzyme in this species is believed to be plastoquinone. Couples the redox reaction to proton translocation, and thus conserves the redox energy in a proton gradient. The chain is NAD(P)H-quinone oxidoreductase subunit 1 from Prochlorococcus marinus subsp. pastoris (strain CCMP1986 / NIES-2087 / MED4).